The following is a 430-amino-acid chain: tRNA(Ile)-lysidine synthase (430 aa).

Residue 21-26 (SGGLDS) coordinates ATP.

It belongs to the tRNA(Ile)-lysidine synthase family.

It is found in the cytoplasm. It carries out the reaction cytidine(34) in tRNA(Ile2) + L-lysine + ATP = lysidine(34) in tRNA(Ile2) + AMP + diphosphate + H(+). Functionally, ligates lysine onto the cytidine present at position 34 of the AUA codon-specific tRNA(Ile) that contains the anticodon CAU, in an ATP-dependent manner. Cytidine is converted to lysidine, thus changing the amino acid specificity of the tRNA from methionine to isoleucine. This is tRNA(Ile)-lysidine synthase from Salmonella agona (strain SL483).